A 63-amino-acid polypeptide reads, in one-letter code: Conotoxin p5a (63 aa).

The signal sequence occupies residues 1–19 (MRCLPVFVILLLLIPSAPC). Residues 20 to 50 (VDAHPKTKDDMPLASFHDNAKGTLQRFWKKR) constitute a propeptide that is removed on maturation. 2 cysteine pairs are disulfide-bonded: cysteine 52–cysteine 59 and cysteine 53–cysteine 60. A Leucine amide modification is found at leucine 62.

In terms of tissue distribution, expressed by the venom duct.

The protein resides in the secreted. Its function is as follows. In vivo, low levels of the peptide injected into male specimens of the Siamese fighting fish causes an immediate aggressive display in this fish in response to their reflection when placed in a mirrored aquarium; High levels of the peptide suppressed this behavior. No effect is observed when injected into mice. The polypeptide is Conotoxin p5a (Conus purpurascens (Purple cone)).